Consider the following 426-residue polypeptide: Glutamate-1-semialdehyde 2,1-aminomutase (426 aa).

An N6-(pyridoxal phosphate)lysine modification is found at K265.

The protein belongs to the class-III pyridoxal-phosphate-dependent aminotransferase family. HemL subfamily. In terms of assembly, homodimer. Pyridoxal 5'-phosphate is required as a cofactor.

Its subcellular location is the cytoplasm. The enzyme catalyses (S)-4-amino-5-oxopentanoate = 5-aminolevulinate. The protein operates within porphyrin-containing compound metabolism; protoporphyrin-IX biosynthesis; 5-aminolevulinate from L-glutamyl-tRNA(Glu): step 2/2. The protein is Glutamate-1-semialdehyde 2,1-aminomutase of Salmonella typhi.